The chain runs to 234 residues: MGGCVGTHHDSSGSLNENSDGTGVALGRNQPLKKDKPKWKSDYPMTDGQLRSKRDEFWDTAPAFEGRKEIWDALKAAAHAFESNDHELAQAIIDGASITLPHGALTECYDELGNRYQLPVYCLAPPINMIEEKSDSETLDIPEPPPNSGHECQLRLRLSTGKDLRLMVRSADTVYHMKRRLHAAEGVEPASQRWFFSGRPLTDKMRLEELKIPKDFVVQVIVSQPIPNPTPVEN.

The disordered stretch occupies residues 1–47; that stretch reads MGGCVGTHHDSSGSLNENSDGTGVALGRNQPLKKDKPKWKSDYPMTD. Over residues 12–21 the composition is skewed to polar residues; sequence SGSLNENSDG. Positions 32-41 are enriched in basic and acidic residues; it reads LKKDKPKWKS. The region spanning 152–227 is the Ubiquitin-like domain; that stretch reads CQLRLRLSTG…VQVIVSQPIP (76 aa).

Functionally, may be involved in the regulation of cellular senescence through a positive feedback loop with TP53. This chain is Ubiquitin domain-containing protein 1 (ubtd1), found in Xenopus laevis (African clawed frog).